Consider the following 189-residue polypeptide: Protein GrpE (189 aa).

The segment at 1-24 is disordered; it reads MADEQNLDTQNPEAQAAENAAPSD. A compositionally biased stretch (low complexity) spans 10–24; sequence QNPEAQAAENAAPSD.

This sequence belongs to the GrpE family. As to quaternary structure, homodimer.

It is found in the cytoplasm. Its function is as follows. Participates actively in the response to hyperosmotic and heat shock by preventing the aggregation of stress-denatured proteins, in association with DnaK and GrpE. It is the nucleotide exchange factor for DnaK and may function as a thermosensor. Unfolded proteins bind initially to DnaJ; upon interaction with the DnaJ-bound protein, DnaK hydrolyzes its bound ATP, resulting in the formation of a stable complex. GrpE releases ADP from DnaK; ATP binding to DnaK triggers the release of the substrate protein, thus completing the reaction cycle. Several rounds of ATP-dependent interactions between DnaJ, DnaK and GrpE are required for fully efficient folding. In Ectopseudomonas mendocina (strain ymp) (Pseudomonas mendocina), this protein is Protein GrpE.